A 199-amino-acid chain; its full sequence is Peptidyl-tRNA hydrolase (199 aa).

Tyr-18 lines the tRNA pocket. His-23 functions as the Proton acceptor in the catalytic mechanism. Tyr-72, Asn-74, and Asn-120 together coordinate tRNA.

Belongs to the PTH family. In terms of assembly, monomer.

The protein resides in the cytoplasm. It catalyses the reaction an N-acyl-L-alpha-aminoacyl-tRNA + H2O = an N-acyl-L-amino acid + a tRNA + H(+). In terms of biological role, hydrolyzes ribosome-free peptidyl-tRNAs (with 1 or more amino acids incorporated), which drop off the ribosome during protein synthesis, or as a result of ribosome stalling. Catalyzes the release of premature peptidyl moieties from peptidyl-tRNA molecules trapped in stalled 50S ribosomal subunits, and thus maintains levels of free tRNAs and 50S ribosomes. The polypeptide is Peptidyl-tRNA hydrolase (Bifidobacterium longum (strain DJO10A)).